The following is a 256-amino-acid chain: tRNA pseudouridine synthase A (256 aa).

The active-site Nucleophile is the Asp-52. A substrate-binding site is contributed by Tyr-110.

It belongs to the tRNA pseudouridine synthase TruA family. As to quaternary structure, homodimer.

The enzyme catalyses uridine(38/39/40) in tRNA = pseudouridine(38/39/40) in tRNA. Formation of pseudouridine at positions 38, 39 and 40 in the anticodon stem and loop of transfer RNAs. This is tRNA pseudouridine synthase A from Stenotrophomonas maltophilia (strain K279a).